A 445-amino-acid chain; its full sequence is Phosphoglucosamine mutase (445 aa).

S102 functions as the Phosphoserine intermediate in the catalytic mechanism. Mg(2+)-binding residues include S102, D240, D242, and D244. S102 carries the phosphoserine modification.

This sequence belongs to the phosphohexose mutase family. Requires Mg(2+) as cofactor. In terms of processing, activated by phosphorylation.

The enzyme catalyses alpha-D-glucosamine 1-phosphate = D-glucosamine 6-phosphate. In terms of biological role, catalyzes the conversion of glucosamine-6-phosphate to glucosamine-1-phosphate. The sequence is that of Phosphoglucosamine mutase from Mycobacterium marinum (strain ATCC BAA-535 / M).